The primary structure comprises 231 residues: 2-C-methyl-D-erythritol 4-phosphate cytidylyltransferase (231 aa).

Belongs to the IspD/TarI cytidylyltransferase family. IspD subfamily.

The catalysed reaction is 2-C-methyl-D-erythritol 4-phosphate + CTP + H(+) = 4-CDP-2-C-methyl-D-erythritol + diphosphate. It functions in the pathway isoprenoid biosynthesis; isopentenyl diphosphate biosynthesis via DXP pathway; isopentenyl diphosphate from 1-deoxy-D-xylulose 5-phosphate: step 2/6. Its function is as follows. Catalyzes the formation of 4-diphosphocytidyl-2-C-methyl-D-erythritol from CTP and 2-C-methyl-D-erythritol 4-phosphate (MEP). The sequence is that of 2-C-methyl-D-erythritol 4-phosphate cytidylyltransferase from Xylella fastidiosa (strain M23).